The chain runs to 264 residues: Protein OXIDATIVE STRESS 3 LIKE 1 (264 aa).

Disordered stretches follow at residues 1 to 76 (MDCV…GPLE) and 178 to 225 (TGEG…QGSF). Residues 29–43 (PSDSSSSPSSSASSS) show a composition bias toward low complexity. The span at 47–56 (NSDDGEKSSE) shows a compositional bias: basic and acidic residues. Residues 57 to 67 (DGGDDAGENEV) show a composition bias toward acidic residues. Residues 179–201 (GEGSSSGGDSSPGSSPTTSGSPP) are compositionally biased toward low complexity. Positions 203 to 212 (QLHHHQHQMK) are enriched in basic residues.

Its subcellular location is the nucleus. Its function is as follows. Promotes slightly the tolerance to zinc (Zn) and to oxidizing chemicals (e.g. diamide). This Arabidopsis thaliana (Mouse-ear cress) protein is Protein OXIDATIVE STRESS 3 LIKE 1.